Here is a 510-residue protein sequence, read N- to C-terminus: ATP synthase subunit alpha (510 aa).

169-176 (GDRQTGKT) contributes to the ATP binding site.

The protein belongs to the ATPase alpha/beta chains family. In terms of assembly, F-type ATPases have 2 components, CF(1) - the catalytic core - and CF(0) - the membrane proton channel. CF(1) has five subunits: alpha(3), beta(3), gamma(1), delta(1), epsilon(1). CF(0) has four main subunits: a(1), b(1), b'(1) and c(9-12).

It is found in the cell inner membrane. The catalysed reaction is ATP + H2O + 4 H(+)(in) = ADP + phosphate + 5 H(+)(out). Produces ATP from ADP in the presence of a proton gradient across the membrane. The alpha chain is a regulatory subunit. This Rhodopseudomonas palustris (strain HaA2) protein is ATP synthase subunit alpha.